Here is a 156-residue protein sequence, read N- to C-terminus: ATP synthase subunit b (156 aa).

Residues 7 to 26 (ILGQAIAFVLFVWFCMKYVW) traverse the membrane as a helical segment.

The protein belongs to the ATPase B chain family. F-type ATPases have 2 components, F(1) - the catalytic core - and F(0) - the membrane proton channel. F(1) has five subunits: alpha(3), beta(3), gamma(1), delta(1), epsilon(1). F(0) has three main subunits: a(1), b(2) and c(10-14). The alpha and beta chains form an alternating ring which encloses part of the gamma chain. F(1) is attached to F(0) by a central stalk formed by the gamma and epsilon chains, while a peripheral stalk is formed by the delta and b chains.

It localises to the cell inner membrane. Its function is as follows. F(1)F(0) ATP synthase produces ATP from ADP in the presence of a proton or sodium gradient. F-type ATPases consist of two structural domains, F(1) containing the extramembraneous catalytic core and F(0) containing the membrane proton channel, linked together by a central stalk and a peripheral stalk. During catalysis, ATP synthesis in the catalytic domain of F(1) is coupled via a rotary mechanism of the central stalk subunits to proton translocation. In terms of biological role, component of the F(0) channel, it forms part of the peripheral stalk, linking F(1) to F(0). The polypeptide is ATP synthase subunit b (Pectobacterium atrosepticum (strain SCRI 1043 / ATCC BAA-672) (Erwinia carotovora subsp. atroseptica)).